We begin with the raw amino-acid sequence, 190 residues long: Apolipoprotein M (190 aa).

Positions 1-22 (MFHQVWAALLSLYGLLFNSMNQ) form a signal peptide, not cleaved. Cystine bridges form between cysteine 23–cysteine 169, cysteine 95–cysteine 185, and cysteine 130–cysteine 159. 2 residues coordinate tetradecanoate: glutamate 138 and arginine 145.

This sequence belongs to the calycin superfamily. Lipocalin family. Highly divergent. Interacts with LRP2; LRP2 mediates APOM renal uptake and subsequent lysosomal degradation. As to expression, expressed by the liver; secreted in plasma.

The protein resides in the secreted. In terms of biological role, probably involved in lipid transport. Can bind sphingosine-1-phosphate, myristic acid, palmitic acid and stearic acid, retinol, all-trans-retinoic acid and 9-cis-retinoic acid. This Mus musculus (Mouse) protein is Apolipoprotein M (Apom).